The sequence spans 633 residues: Threonine--tRNA ligase (633 aa).

Positions 1 to 61 (MINVYFSDNS…TEDCKFEVIT (61 aa)) constitute a TGS domain. The segment at 242-533 (DHRKIGKELE…LIEHHSGKLP (292 aa)) is catalytic. 3 residues coordinate Zn(2+): Cys333, His384, and His510.

It belongs to the class-II aminoacyl-tRNA synthetase family. As to quaternary structure, homodimer. Requires Zn(2+) as cofactor.

The protein resides in the cytoplasm. The enzyme catalyses tRNA(Thr) + L-threonine + ATP = L-threonyl-tRNA(Thr) + AMP + diphosphate + H(+). Functionally, catalyzes the attachment of threonine to tRNA(Thr) in a two-step reaction: L-threonine is first activated by ATP to form Thr-AMP and then transferred to the acceptor end of tRNA(Thr). Also edits incorrectly charged L-seryl-tRNA(Thr). This chain is Threonine--tRNA ligase, found in Ehrlichia ruminantium (strain Gardel).